The chain runs to 599 residues: MRSHYCGGINESHIDQEVTLCGWVHRRRDHGGVIFLDLRDRDGMSQVVVDPDTPESFALAEKVRSEFVIKVTGRVRRRPAGTENNNMPTGQVELLGKELVILNAAATPPFPLDEHVDVGEDVRLRYRFVDLRRPEMINRLRFRSRVTSYIRNFLDSRGFMDVETPILTRATPEGARDYLVPSRTHEGSFFALPQSPQLFKQLLMVSGVDRYYQIAKCFRDEDLRADRQPEFTQVDIEASFIDEETLMGLNEEMIRSLFKDVLDVELPEFPRMPYSEAMQRYGSDKPDLRIPLELQDVGDLVESVDFKVFAGPAKDPKGRVAALRVPKGAELTRKQIDDYTRFVGIYGAKGLAYIKVNELTKGAEGLQSPIVKFLGDDVALAIMERVGAEDGDIVFFGADKATVVNEALGALRIKVGHDLNMLTCEWAPMWVVDFPMFEELPDGNLTAIHHPFTAPSCSPEDLAADPANALSRAYDMVLNGTELGGGSIRIHDEKMQEAVFRILGIGEEEARAKFGFLLDALKFGCPPHGGLAFGLDRLVMLMTGSSSIRDVIAFPKTQSATCLMTQAPGEVDEKQLKELHIRLRRSAKAVEGNKAENKE.

Residue Glu-173 participates in L-aspartate binding. Residues Gln-197–Lys-200 are aspartate. Position 219 (Arg-219) interacts with L-aspartate. Residues Arg-219–Glu-221 and Gln-228 each bind ATP. Residue His-449 participates in L-aspartate binding. Glu-482 serves as a coordination point for ATP. Residue Arg-489 participates in L-aspartate binding. An ATP-binding site is contributed by Gly-534–Arg-537.

This sequence belongs to the class-II aminoacyl-tRNA synthetase family. Type 1 subfamily. In terms of assembly, homodimer.

The protein localises to the cytoplasm. It catalyses the reaction tRNA(Asx) + L-aspartate + ATP = L-aspartyl-tRNA(Asx) + AMP + diphosphate. Aspartyl-tRNA synthetase with relaxed tRNA specificity since it is able to aspartylate not only its cognate tRNA(Asp) but also tRNA(Asn). Reaction proceeds in two steps: L-aspartate is first activated by ATP to form Asp-AMP and then transferred to the acceptor end of tRNA(Asp/Asn). The protein is Aspartate--tRNA(Asp/Asn) ligase of Marinobacter nauticus (strain ATCC 700491 / DSM 11845 / VT8) (Marinobacter aquaeolei).